The chain runs to 196 residues: MCTTFKAAIFDMGGVLFTWNPIVDTQVSLKDLGTIINSETWEQFERGKIEPDDCYHQLGSQIGLPGSEIAATFRQTTGCLRPDARMTSLLRELKGQGVAVYMMTNIPAPDFHQLREMHYEWDLFDGIFASALEGMRKPDLEFYEHVLKQIDTSAAETIFVDDKLENVIAAQAVGMVGLHLTDSLATCMELRQLVGC.

This sequence belongs to the HAD-like hydrolase superfamily.

The enzyme catalyses (S,S)-drim-8-en-11-yl phosphate + H2O = (S,S)-drim-8-en-11-ol + phosphate. Its pathway is secondary metabolite biosynthesis; terpenoid biosynthesis. Its function is as follows. Sesquiterpene phosphatase; part of the gene cluster that mediates the biosynthesis of astellolides, drimane-type sesquiterpene esters that show antimicrobial, anti-inflammatory, and anti-tumor activities. The first step in astellolide biosynthesis is performed by the sesquiterpene cyclase astC that catalyzes the formation of drimanyl pyrophosphate from farnesyl pyrophosphate. Drimanyl pyrophosphate is then dephosphorylated by the sesquiterpene phosphatase astI to produce drimanyl monophosphate which is further dephosphorylated to drim-8-ene-11-ol by atsK. Drim-8-ene-11-ol is converted to confertifolin, probably by the cytochrome P450 monooxygenase astD and/or the dehydrogenase astE. The cytochrome P450 monooxygenases astB, astF and astJ then hydroxylate confertifolin at C6, C14, or C15 to form trihydroxy confertifolin. The nonribosomal peptide synthetase astA catalyzes ester bond formation between trihydroxy contifolin and benzoic acid (BA) or 4-hydroxy benzoic acid (4HBA), leading to the formation of dideacetyl astellolides A and B, respectively. Finally, the O-acetyltransferase astG converts dideacetyl astellolides A and B into deacetyl astellolides A and B. The protein is Sesquiterpene phosphatase astK of Aspergillus oryzae (strain ATCC 42149 / RIB 40) (Yellow koji mold).